The primary structure comprises 43 residues: Peroxidase (43 aa).

The protein belongs to the peroxidase family. Classical plant (class III) peroxidase subfamily. Requires Ca(2+) as cofactor. Heme b is required as a cofactor.

It carries out the reaction 2 a phenolic donor + H2O2 = 2 a phenolic radical donor + 2 H2O. Its function is as follows. Removal of H(2)O(2), oxidation of toxic reductants, biosynthesis and degradation of lignin, suberization, auxin catabolism, response to environmental stresses such as wounding, pathogen attack and oxidative stress. These functions might be dependent on each isozyme/isoform in each plant tissue. This is Peroxidase from Cynara cardunculus var. scolymus (Globe artichoke).